Consider the following 131-residue polypeptide: Small ribosomal subunit protein uS8 (131 aa).

Belongs to the universal ribosomal protein uS8 family. In terms of assembly, part of the 30S ribosomal subunit. Contacts proteins S5 and S12.

In terms of biological role, one of the primary rRNA binding proteins, it binds directly to 16S rRNA central domain where it helps coordinate assembly of the platform of the 30S subunit. This Paraburkholderia xenovorans (strain LB400) protein is Small ribosomal subunit protein uS8.